Consider the following 65-residue polypeptide: VESP-VB1 (65 aa).

The first 23 residues, 1-23, serve as a signal peptide directing secretion; that stretch reads MKMSILFLFALIASLACLQLTFA. AXPX repeat units lie at residues 23–26, 27–30, 31–34, 35–38, 39–42, 43–46, and 47–50; these read AAPA, ASPL, ANPG, ASPE, AAPL, ADPL, and ADPF. Positions 24–49 are excised as a propeptide; it reads APAASPLANPGASPEAAPLADPLADP. The residue at position 62 (Leu-62) is a Leucine amide.

As to expression, expressed by the venom gland.

It localises to the secreted. Its function is as follows. Antimicrobial peptide. Shows activity against both Gram-positive (S.aureus MIC=1.0-3.75 ug/ml) and -negative (E.coli MIC=7.5-15 ug/ml) bacteria, as well against fungi (C.albicans MIC=30 ug/ml). Also promotes important mast cell degranulation. Shows little hemolytic activity on rabbit and human erythrocytes. Its mast cell degranulation activity may be related to the activation of G-protein coupled receptors in mast cells as well as interaction with other proteins located in cell endosomal membranes in the mast cells. The polypeptide is VESP-VB1 (Vespa bicolor (Black shield wasp)).